A 161-amino-acid chain; its full sequence is Nucleotide-binding protein Bphyt_3208 (161 aa).

This sequence belongs to the YajQ family.

Its function is as follows. Nucleotide-binding protein. In Paraburkholderia phytofirmans (strain DSM 17436 / LMG 22146 / PsJN) (Burkholderia phytofirmans), this protein is Nucleotide-binding protein Bphyt_3208.